A 179-amino-acid polypeptide reads, in one-letter code: Adenine phosphoribosyltransferase (179 aa).

The protein belongs to the purine/pyrimidine phosphoribosyltransferase family. As to quaternary structure, homodimer.

It is found in the cytoplasm. The enzyme catalyses AMP + diphosphate = 5-phospho-alpha-D-ribose 1-diphosphate + adenine. It participates in purine metabolism; AMP biosynthesis via salvage pathway; AMP from adenine: step 1/1. Functionally, catalyzes a salvage reaction resulting in the formation of AMP, that is energically less costly than de novo synthesis. This Helicobacter pylori (strain ATCC 700392 / 26695) (Campylobacter pylori) protein is Adenine phosphoribosyltransferase.